Reading from the N-terminus, the 207-residue chain is Thymidylate kinase (207 aa).

An ATP-binding site is contributed by 12–19 (GVDGAGKS).

It belongs to the thymidylate kinase family.

The enzyme catalyses dTMP + ATP = dTDP + ADP. Phosphorylation of dTMP to form dTDP in both de novo and salvage pathways of dTTP synthesis. The polypeptide is Thymidylate kinase (Bordetella petrii (strain ATCC BAA-461 / DSM 12804 / CCUG 43448)).